Reading from the N-terminus, the 334-residue chain is MSDLYKKHFLKLLDFTPAQFTSLLTLAAQLKADKKNGKEVQKLTGKNIALIFEKDSTRTRCSFEVAAFDQGARVTYLGPSGSQIGHKESIKDTARVLGRMYDGIQYRGHGQEVVETLAQYAGVPVWNGLTNEFHPTQLLADLMTMQEHLPGKAFNEMTLVYAGDARNNMGNSMLEAAALTGLDLRLLAPKACWPEESLVAECSALAEKHGGKITLTEDVAAGVKGADFIYTDVWVSMGEAKEKWAERIALLRGYQVNAQMMALTDNPNVKFLHCLPAFHDDQTTLGKQMAKEFDLHGGMEVTDEVFESAASIVFDQAENRMHTIKAVMMATLGE.

Carbamoyl phosphate-binding positions include 56–59, Gln83, Arg107, and 134–137; these read STRT and HPTQ. Residues Asn168, Asp232, and 236-237 each bind L-ornithine; that span reads SM. Residues 274 to 275 and Arg320 each bind carbamoyl phosphate; that span reads CL.

It belongs to the aspartate/ornithine carbamoyltransferase superfamily. OTCase family. As to quaternary structure, in E.coli strain K12, trimer of identical or non-identical chains are composed of ArgI (I) and/or ArgF (F). The trimer has the following composition: FFI, FFF, FII, III. E.coli strains B and W, which are known to contain only ArgI, produce only a trimer of identical chains (III).

Its subcellular location is the cytoplasm. It carries out the reaction carbamoyl phosphate + L-ornithine = L-citrulline + phosphate + H(+). It participates in amino-acid biosynthesis; L-arginine biosynthesis; L-arginine from L-ornithine and carbamoyl phosphate: step 1/3. Reversibly catalyzes the transfer of the carbamoyl group from carbamoyl phosphate (CP) to the N(epsilon) atom of ornithine (ORN) to produce L-citrulline, which is a substrate for argininosuccinate synthetase, the enzyme involved in the final step in arginine biosynthesis. In Escherichia coli (strain K12), this protein is Ornithine carbamoyltransferase subunit F.